The following is a 239-amino-acid chain: Ribosomal RNA small subunit methyltransferase G (239 aa).

S-adenosyl-L-methionine is bound by residues Gly-78, Phe-83, 129-130 (AE), and Arg-148.

It belongs to the methyltransferase superfamily. RNA methyltransferase RsmG family.

The protein localises to the cytoplasm. In terms of biological role, specifically methylates the N7 position of a guanine in 16S rRNA. This chain is Ribosomal RNA small subunit methyltransferase G, found in Clostridium botulinum (strain Eklund 17B / Type B).